The chain runs to 117 residues: Large ribosomal subunit protein bL20 (117 aa).

The protein belongs to the bacterial ribosomal protein bL20 family.

Functionally, binds directly to 23S ribosomal RNA and is necessary for the in vitro assembly process of the 50S ribosomal subunit. It is not involved in the protein synthesizing functions of that subunit. This chain is Large ribosomal subunit protein bL20, found in Vibrio atlanticus (strain LGP32) (Vibrio splendidus (strain Mel32)).